The sequence spans 770 residues: Kinesin-like protein klpA (770 aa).

The interval 1-152 (MENVQSRMQG…GLGKRGEWDQ (152 aa)) is disordered. Residues 85 to 105 (SSTLTRSASAASRPRGPLSSS) are compositionally biased toward low complexity. The segment covering 106-119 (TSGRPKTSMSTSRR) has biased composition (polar residues). The segment covering 134–152 (THQEERSYGGLGKRGEWDQ) has biased composition (basic and acidic residues). The stretch at 175–425 (QESSGLKDAL…QELKGNIRVF (251 aa)) forms a coiled coil. In terms of domain architecture, Kinesin motor spans 421–756 (NIRVFCRVRP…LKFATKVHNT (336 aa)). 514–521 (GQTGSGKT) is an ATP binding site.

It belongs to the TRAFAC class myosin-kinesin ATPase superfamily. Kinesin family. NCD subfamily.

It is found in the cytoplasm. Its subcellular location is the cytoskeleton. The chain is Kinesin-like protein klpA (klpA) from Emericella nidulans (strain FGSC A4 / ATCC 38163 / CBS 112.46 / NRRL 194 / M139) (Aspergillus nidulans).